The sequence spans 355 residues: 3-dehydroquinate synthase (355 aa).

NAD(+)-binding positions include Gly-98–Asp-102, Thr-122–Thr-123, Lys-135, Lys-144, and Thr-162–Thr-165. Positions 177, 240, and 257 each coordinate Zn(2+).

Belongs to the sugar phosphate cyclases superfamily. Dehydroquinate synthase family. The cofactor is Co(2+). Zn(2+) serves as cofactor. NAD(+) is required as a cofactor.

Its subcellular location is the cytoplasm. It carries out the reaction 7-phospho-2-dehydro-3-deoxy-D-arabino-heptonate = 3-dehydroquinate + phosphate. Its pathway is metabolic intermediate biosynthesis; chorismate biosynthesis; chorismate from D-erythrose 4-phosphate and phosphoenolpyruvate: step 2/7. Catalyzes the conversion of 3-deoxy-D-arabino-heptulosonate 7-phosphate (DAHP) to dehydroquinate (DHQ). The protein is 3-dehydroquinate synthase of Dictyoglomus thermophilum (strain ATCC 35947 / DSM 3960 / H-6-12).